Here is a 101-residue protein sequence, read N- to C-terminus: Protein S100-A3 (101 aa).

EF-hand domains lie at 12-47 (IVCT…TWTP) and 50-85 (FREC…LCLY). Lys26 contributes to the Ca(2+) binding site. Residues Cys30 and Cys68 are joined by a disulfide bond. Citrulline; by PAD3 is present on Arg51. Residues Asp63, Asn65, Asp67, Glu69, and Glu74 each contribute to the Ca(2+) site. Residues Cys83, Cys86, His87, and Cys93 each coordinate Zn(2+).

This sequence belongs to the S-100 family. As to quaternary structure, homodimer and homotetramer for the citrullinated form. More than half of the arginine residues undergo citrullination by PAD1 and PAD2. Arg-51 is specifically citrullinated by PAD3 and promotes tetramerization. Skin specific, specifically expressed in cuticle of pelage follicle.

It localises to the cytoplasm. Binds both calcium and zinc. May be involved in calcium-dependent cuticle cell differentiation, hair shaft and hair cuticular barrier formation. The polypeptide is Protein S100-A3 (S100a3) (Mus musculus (Mouse)).